An 81-amino-acid chain; its full sequence is Putative sulfur carrier protein VNG_5061C/VNG_5236C/VNG_6059C/VNG_6467C (81 aa).

Catalysis depends on Cys18, which acts as the Cysteine persulfide intermediate.

It belongs to the sulfur carrier protein TusA family.

The polypeptide is Putative sulfur carrier protein VNG_5061C/VNG_5236C/VNG_6059C/VNG_6467C (Halobacterium salinarum (strain ATCC 700922 / JCM 11081 / NRC-1) (Halobacterium halobium)).